A 681-amino-acid polypeptide reads, in one-letter code: Heat shock 70 kDa protein (681 aa).

Positions 655 to 665 (NFPGGMPGAGM) are enriched in gly residues. The disordered stretch occupies residues 655–681 (NFPGGMPGAGMPGNAPAGSGPTVEEVD). Over residues 666–675 (PGNAPAGSGP) the composition is skewed to low complexity.

The protein belongs to the heat shock protein 70 family.

In Plasmodium falciparum, this protein is Heat shock 70 kDa protein.